Here is a 257-residue protein sequence, read N- to C-terminus: Indole-3-glycerol phosphate synthase (257 aa).

It belongs to the TrpC family.

It catalyses the reaction 1-(2-carboxyphenylamino)-1-deoxy-D-ribulose 5-phosphate + H(+) = (1S,2R)-1-C-(indol-3-yl)glycerol 3-phosphate + CO2 + H2O. It participates in amino-acid biosynthesis; L-tryptophan biosynthesis; L-tryptophan from chorismate: step 4/5. The polypeptide is Indole-3-glycerol phosphate synthase (Halalkalibacterium halodurans (strain ATCC BAA-125 / DSM 18197 / FERM 7344 / JCM 9153 / C-125) (Bacillus halodurans)).